The following is a 177-amino-acid chain: Large ribosomal subunit protein uL6 (177 aa).

It belongs to the universal ribosomal protein uL6 family. Part of the 50S ribosomal subunit.

Its function is as follows. This protein binds to the 23S rRNA, and is important in its secondary structure. It is located near the subunit interface in the base of the L7/L12 stalk, and near the tRNA binding site of the peptidyltransferase center. This Acinetobacter baylyi (strain ATCC 33305 / BD413 / ADP1) protein is Large ribosomal subunit protein uL6.